The chain runs to 207 residues: N-(5'-phosphoribosyl)anthranilate isomerase (207 aa).

Belongs to the TrpF family.

The catalysed reaction is N-(5-phospho-beta-D-ribosyl)anthranilate = 1-(2-carboxyphenylamino)-1-deoxy-D-ribulose 5-phosphate. The protein operates within amino-acid biosynthesis; L-tryptophan biosynthesis; L-tryptophan from chorismate: step 3/5. In Staphylococcus epidermidis (strain ATCC 35984 / DSM 28319 / BCRC 17069 / CCUG 31568 / BM 3577 / RP62A), this protein is N-(5'-phosphoribosyl)anthranilate isomerase.